The primary structure comprises 314 residues: Chitinase 1 (314 aa).

An N-terminal signal peptide occupies residues 1–26 (MASVSPSSLLLLFFALLSPLLPLTSA). Residues 27-296 (LVFREYIGSQ…NVFRYEMQAQ (270 aa)) form the GH18 domain. The active-site Proton donor is E151.

The protein belongs to the glycosyl hydrolase 18 family. Chitinase class II subfamily.

It catalyses the reaction Random endo-hydrolysis of N-acetyl-beta-D-glucosaminide (1-&gt;4)-beta-linkages in chitin and chitodextrins.. Functionally, able to cleave glycolchitin. This is Chitinase 1 from Tulipa saxatilis subsp. bakeri (Tulip).